Here is a 38-residue protein sequence, read N- to C-terminus: Large ribosomal subunit protein bL36 (38 aa).

Belongs to the bacterial ribosomal protein bL36 family.

This chain is Large ribosomal subunit protein bL36, found in Kosmotoga olearia (strain ATCC BAA-1733 / DSM 21960 / TBF 19.5.1).